We begin with the raw amino-acid sequence, 326 residues long: Malate dehydrogenase (326 aa).

11-17 lines the NAD(+) pocket; that stretch reads GAAGQIG. 2 residues coordinate substrate: arginine 92 and arginine 98. Residues asparagine 105, glutamine 112, and 129-131 contribute to the NAD(+) site; that span reads VGN. Asparagine 131 and arginine 162 together coordinate substrate. Histidine 187 functions as the Proton acceptor in the catalytic mechanism.

It belongs to the LDH/MDH superfamily. MDH type 2 family.

The enzyme catalyses (S)-malate + NAD(+) = oxaloacetate + NADH + H(+). Functionally, catalyzes the reversible oxidation of malate to oxaloacetate. The sequence is that of Malate dehydrogenase from Alkalilimnicola ehrlichii (strain ATCC BAA-1101 / DSM 17681 / MLHE-1).